The chain runs to 59 residues: Photosystem II reaction center protein K (59 aa).

The propeptide occupies 1 to 22; sequence MLNIFSLICLNSDLYSSRFFLA. A helical membrane pass occupies residues 38–58; it reads MPVIPLFFLLLAFVWQAAVSF.

This sequence belongs to the PsbK family. PSII is composed of 1 copy each of membrane proteins PsbA, PsbB, PsbC, PsbD, PsbE, PsbF, PsbH, PsbI, PsbJ, PsbK, PsbL, PsbM, PsbT, PsbX, PsbY, PsbZ, Psb30/Ycf12, at least 3 peripheral proteins of the oxygen-evolving complex and a large number of cofactors. It forms dimeric complexes.

It is found in the plastid. It localises to the chloroplast thylakoid membrane. In terms of biological role, one of the components of the core complex of photosystem II (PSII). PSII is a light-driven water:plastoquinone oxidoreductase that uses light energy to abstract electrons from H(2)O, generating O(2) and a proton gradient subsequently used for ATP formation. It consists of a core antenna complex that captures photons, and an electron transfer chain that converts photonic excitation into a charge separation. This chain is Photosystem II reaction center protein K, found in Oenothera elata subsp. hookeri (Hooker's evening primrose).